The chain runs to 294 residues: Nucleoside-specific channel-forming protein Tsx (294 aa).

Residues 1 to 22 (MKKTLLAASAVVALSASFTAGA) form the signal peptide.

Belongs to the nucleoside-specific channel-forming outer membrane porin (Tsx) (TC 1.B.10) family.

The protein resides in the cell outer membrane. Functionally, functions as a substrate-specific channel for nucleosides and deoxynucleosides. Also functions in albicidin uptake and as receptor for colicin K. Also is a receptor for several Tsx-specific bacteriophages. The protein is Nucleoside-specific channel-forming protein Tsx of Klebsiella aerogenes (strain ATCC 13048 / DSM 30053 / CCUG 1429 / JCM 1235 / KCTC 2190 / NBRC 13534 / NCIMB 10102 / NCTC 10006 / CDC 819-56) (Enterobacter aerogenes).